The following is a 373-amino-acid chain: tRNA/tmRNA (uracil-C(5))-methyltransferase (373 aa).

Gln190, Tyr219, Asn224, Glu240, and Asp300 together coordinate S-adenosyl-L-methionine. The Nucleophile role is filled by Cys325. The active-site Proton acceptor is Glu359.

This sequence belongs to the class I-like SAM-binding methyltransferase superfamily. RNA M5U methyltransferase family. TrmA subfamily.

The enzyme catalyses uridine(54) in tRNA + S-adenosyl-L-methionine = 5-methyluridine(54) in tRNA + S-adenosyl-L-homocysteine + H(+). It catalyses the reaction uridine(341) in tmRNA + S-adenosyl-L-methionine = 5-methyluridine(341) in tmRNA + S-adenosyl-L-homocysteine + H(+). Its function is as follows. Dual-specificity methyltransferase that catalyzes the formation of 5-methyluridine at position 54 (m5U54) in all tRNAs, and that of position 341 (m5U341) in tmRNA (transfer-mRNA). In Chromohalobacter salexigens (strain ATCC BAA-138 / DSM 3043 / CIP 106854 / NCIMB 13768 / 1H11), this protein is tRNA/tmRNA (uracil-C(5))-methyltransferase.